The sequence spans 466 residues: Asparagine--tRNA ligase (466 aa).

This sequence belongs to the class-II aminoacyl-tRNA synthetase family. As to quaternary structure, homodimer.

The protein resides in the cytoplasm. The enzyme catalyses tRNA(Asn) + L-asparagine + ATP = L-asparaginyl-tRNA(Asn) + AMP + diphosphate + H(+). This chain is Asparagine--tRNA ligase, found in Shewanella pealeana (strain ATCC 700345 / ANG-SQ1).